A 250-amino-acid chain; its full sequence is DNA repair protein RecO (250 aa).

The protein belongs to the RecO family.

Involved in DNA repair and RecF pathway recombination. The sequence is that of DNA repair protein RecO from Thermodesulfovibrio yellowstonii (strain ATCC 51303 / DSM 11347 / YP87).